The following is a 211-amino-acid chain: MVTPQHAQELSTGARELGIDLSEAQHEQLLAYLALLIKWNKAYNLTAVRNPDEMVSRHLLDSLSVVPFIEGTRWMDVGSGGGMPGIPMAILFPERNISLLDSNGKKTRFQTQVKLELKLDNLEVIHSRAENYQPDVPFDGIISRAFSSLEDFAGWTRHMGDVNTRWLAMKGLHPADELVALPSDFHLDSAQALTVPGCQGQRHLLILRRTA.

S-adenosyl-L-methionine is bound by residues Gly78, Met83, 129–130 (AE), and Arg144.

The protein belongs to the methyltransferase superfamily. RNA methyltransferase RsmG family.

It localises to the cytoplasm. It carries out the reaction guanosine(527) in 16S rRNA + S-adenosyl-L-methionine = N(7)-methylguanosine(527) in 16S rRNA + S-adenosyl-L-homocysteine. Functionally, specifically methylates the N7 position of guanine in position 527 of 16S rRNA. The polypeptide is Ribosomal RNA small subunit methyltransferase G (Pseudomonas syringae pv. tomato (strain ATCC BAA-871 / DC3000)).